Reading from the N-terminus, the 143-residue chain is SsrA-binding protein (143 aa).

This sequence belongs to the SmpB family.

It localises to the cytoplasm. Functionally, required for rescue of stalled ribosomes mediated by trans-translation. Binds to transfer-messenger RNA (tmRNA), required for stable association of tmRNA with ribosomes. tmRNA and SmpB together mimic tRNA shape, replacing the anticodon stem-loop with SmpB. tmRNA is encoded by the ssrA gene; the 2 termini fold to resemble tRNA(Ala) and it encodes a 'tag peptide', a short internal open reading frame. During trans-translation Ala-aminoacylated tmRNA acts like a tRNA, entering the A-site of stalled ribosomes, displacing the stalled mRNA. The ribosome then switches to translate the ORF on the tmRNA; the nascent peptide is terminated with the 'tag peptide' encoded by the tmRNA and targeted for degradation. The ribosome is freed to recommence translation, which seems to be the essential function of trans-translation. This Deinococcus radiodurans (strain ATCC 13939 / DSM 20539 / JCM 16871 / CCUG 27074 / LMG 4051 / NBRC 15346 / NCIMB 9279 / VKM B-1422 / R1) protein is SsrA-binding protein.